The sequence spans 171 residues: Lipoprotein signal peptidase (171 aa).

Transmembrane regions (helical) follow at residues 8–28 (SFLW…YIVV), 64–84 (WQQY…VYFL), and 99–119 (ALII…GFVV). Catalysis depends on residues Asp120 and Asp138. The chain crosses the membrane as a helical span at residues 133–153 (VFNIADIAICIGAGLLALDAF).

It belongs to the peptidase A8 family.

The protein resides in the cell inner membrane. The enzyme catalyses Release of signal peptides from bacterial membrane prolipoproteins. Hydrolyzes -Xaa-Yaa-Zaa-|-(S,diacylglyceryl)Cys-, in which Xaa is hydrophobic (preferably Leu), and Yaa (Ala or Ser) and Zaa (Gly or Ala) have small, neutral side chains.. Its pathway is protein modification; lipoprotein biosynthesis (signal peptide cleavage). Its function is as follows. This protein specifically catalyzes the removal of signal peptides from prolipoproteins. This Haemophilus influenzae (strain PittGG) protein is Lipoprotein signal peptidase.